The following is a 376-amino-acid chain: Protein insensitive (376 aa).

Residues Gln-50–Ile-79 are a coiled coil. A BEN domain is found at Gly-258 to Met-356.

As to quaternary structure, homodimer. Interacts (via BEN domain) with Su(H). Interacts with Cp190.

It localises to the nucleus. In terms of biological role, can act as both a transcriptional repressor and corepressor. Represses the expression of genes involved in neural development and preferentially binds palindromic sequence 5'-CCAATTGG-3' to mediate transcriptional repression. Acts as a corepressor for suppressor of hairless (Su(H)) and inhibits Notch signaling during peripheral nervous system development. In Drosophila melanogaster (Fruit fly), this protein is Protein insensitive (insv).